The sequence spans 508 residues: Non-structural protein 1 (508 aa).

Over residues 424 to 453 (NTESTTTNNAQSPVSDPVNASANVKTSPAG) the composition is skewed to polar residues. Residues 424 to 464 (NTESTTTNNAQSPVSDPVNASANVKTSPAGTHTDESVMKKE) are disordered. Residues 455–464 (HTDESVMKKE) are compositionally biased toward basic and acidic residues.

The polypeptide is Non-structural protein 1 (Segment-5) (Banna virus (BAV)).